We begin with the raw amino-acid sequence, 251 residues long: 5-oxoprolinase subunit A (251 aa).

Belongs to the LamB/PxpA family. Forms a complex composed of PxpA, PxpB and PxpC.

The catalysed reaction is 5-oxo-L-proline + ATP + 2 H2O = L-glutamate + ADP + phosphate + H(+). Functionally, catalyzes the cleavage of 5-oxoproline to form L-glutamate coupled to the hydrolysis of ATP to ADP and inorganic phosphate. The protein is 5-oxoprolinase subunit A of Vibrio parahaemolyticus serotype O3:K6 (strain RIMD 2210633).